Consider the following 308-residue polypeptide: Probable plastid-lipid-associated protein 9, chloroplastic (308 aa).

Residues 1-55 (MALIQHGSVSGTSAVRLSFSSSVSPPSSSPPLSRVSLNFQSEKKSCYRRMICRAM) constitute a chloroplast transit peptide.

Belongs to the PAP/fibrillin family.

Its subcellular location is the plastid. It is found in the chloroplast. It localises to the plastoglobule. This Arabidopsis thaliana (Mouse-ear cress) protein is Probable plastid-lipid-associated protein 9, chloroplastic (PAP9).